The chain runs to 220 residues: Superoxide dismutase [Cu-Zn], chloroplastic (220 aa).

A chloroplast-targeting transit peptide spans 1-66 (MAAHCILFSS…AAPKPLTVFA (66 aa)). Cu cation-binding residues include H112, H114, and H129. A disulfide bridge connects residues C123 and C212. Zn(2+) is bound by residues H129, H137, H146, and D149. Residue H186 participates in Cu cation binding.

The protein belongs to the Cu-Zn superoxide dismutase family. Homotetramer. It depends on Cu cation as a cofactor. The cofactor is Zn(2+).

The protein localises to the plastid. Its subcellular location is the chloroplast. The enzyme catalyses 2 superoxide + 2 H(+) = H2O2 + O2. Its function is as follows. Destroys radicals which are normally produced within the cells and which are toxic to biological systems. This chain is Superoxide dismutase [Cu-Zn], chloroplastic (SODCP), found in Solidago canadensis var. scabra (Tall goldenrod).